Here is a 97-residue protein sequence, read N- to C-terminus: Co-chaperonin GroES (97 aa).

This sequence belongs to the GroES chaperonin family. Heptamer of 7 subunits arranged in a ring. Interacts with the chaperonin GroEL.

It is found in the cytoplasm. Together with the chaperonin GroEL, plays an essential role in assisting protein folding. The GroEL-GroES system forms a nano-cage that allows encapsulation of the non-native substrate proteins and provides a physical environment optimized to promote and accelerate protein folding. GroES binds to the apical surface of the GroEL ring, thereby capping the opening of the GroEL channel. This Pseudomonas savastanoi pv. phaseolicola (strain 1448A / Race 6) (Pseudomonas syringae pv. phaseolicola (strain 1448A / Race 6)) protein is Co-chaperonin GroES.